The sequence spans 83 residues: RNA-binding protein Hfq (83 aa).

The Sm domain maps to 10–70 (DAFLNQVRKE…ISTVSPLKPV (61 aa)).

Belongs to the Hfq family. In terms of assembly, homohexamer.

In terms of biological role, RNA chaperone that binds small regulatory RNA (sRNAs) and mRNAs to facilitate mRNA translational regulation in response to envelope stress, environmental stress and changes in metabolite concentrations. Also binds with high specificity to tRNAs. This Pelotomaculum thermopropionicum (strain DSM 13744 / JCM 10971 / SI) protein is RNA-binding protein Hfq.